We begin with the raw amino-acid sequence, 249 residues long: Methyl-coenzyme M reductase I subunit gamma (249 aa).

Arg120 provides a ligand contact to coenzyme M.

Belongs to the methyl-coenzyme M reductase gamma subunit family. MCR is a hexamer of two alpha, two beta, and two gamma chains, forming a dimer of heterotrimers. The cofactor is coenzyme F430.

It localises to the cytoplasm. It catalyses the reaction coenzyme B + methyl-coenzyme M = methane + coenzyme M-coenzyme B heterodisulfide. It functions in the pathway one-carbon metabolism; methyl-coenzyme M reduction; methane from methyl-coenzyme M: step 1/1. Methyl-coenzyme M reductase activity is inhibited by 3-nitrooxypropanol (3-NOP) in vitro and in vivo, by oxidation of its active site Ni(I), which stops both growth and methanogenesis. Is also inhibited by the reaction product CoM-S-S-CoB. Functionally, component of the methyl-coenzyme M reductase (MCR) I that catalyzes the reductive cleavage of methyl-coenzyme M (CoM-S-CH3 or 2-(methylthio)ethanesulfonate) using coenzyme B (CoB or 7-mercaptoheptanoylthreonine phosphate) as reductant which results in the production of methane and the mixed heterodisulfide of CoB and CoM (CoM-S-S-CoB). This is the final step in methanogenesis. Neither N-6-mercaptohexanoylthreonine phosphate (H-S-HxoTP) nor N-8-mercaptooctanoylthreonine phosphate (H-SOcoTP) nor any other thiol compound such as CoA or CoM can substitute for CoB as the electron donor. This Methanothermobacter marburgensis (strain ATCC BAA-927 / DSM 2133 / JCM 14651 / NBRC 100331 / OCM 82 / Marburg) (Methanobacterium thermoautotrophicum) protein is Methyl-coenzyme M reductase I subunit gamma (mcrG).